Here is an 817-residue protein sequence, read N- to C-terminus: General transcription factor 3C polypeptide 4 (817 aa).

M1 is subject to N-acetylmethionine. The disordered stretch occupies residues 1 to 40; the sequence is MSEADQALVGPKADEPSPPAEEKDEGGGKEAAADAAPGPS. K221 is covalently cross-linked (Glycyl lysine isopeptide (Lys-Gly) (interchain with G-Cter in SUMO2)). Phosphoserine occurs at positions 600 and 607. Residues 603–658 are disordered; the sequence is LLVDSPGMGDGEDEQQEEGTSKQGTKAGLQEKSKEGDTEETPEDSLTAGGDTGGRE. A Glycyl lysine isopeptide (Lys-Gly) (interchain with G-Cter in SUMO2) cross-link involves residue K624. Position 647 is a phosphoserine (S647).

The protein belongs to the TFIIIC subunit 4 family. In terms of assembly, part of the TFIIIC subcomplex TFIIIC2, consisting of six subunits, GTF3C1, GTF3C2, GTF3C3, GTF3C4, GTF3C5 and GTF3C6. Interacts with BRF1, GTF3C1, GTF3C2, GTF3C5, GTF3C6, POLR3C and POLR3F.

It is found in the nucleus. The enzyme catalyses L-lysyl-[protein] + acetyl-CoA = N(6)-acetyl-L-lysyl-[protein] + CoA + H(+). In terms of biological role, essential for RNA polymerase III to make a number of small nuclear and cytoplasmic RNAs, including 5S RNA, tRNA, and adenovirus-associated (VA) RNA of both cellular and viral origin. Has histone acetyltransferase activity (HAT) with unique specificity for free and nucleosomal H3. May cooperate with GTF3C5 in facilitating the recruitment of TFIIIB and RNA polymerase through direct interactions with BRF1, POLR3C and POLR3F. May be localized close to the A box. The sequence is that of General transcription factor 3C polypeptide 4 (Gtf3c4) from Mus musculus (Mouse).